Reading from the N-terminus, the 624-residue chain is Cell pattern formation-associated protein ust1 (624 aa).

Disordered regions lie at residues 1–24 (MSTA…APTG) and 43–99 (RSGS…GHSS). Low complexity predominate over residues 43–62 (RSGSVPASASGSAPGSASGS). Residues 70-85 (QHHTGHHHYSAHHTHS) show a composition bias toward basic residues. The HTH APSES-type domain occupies 233–339 (RVTTTLWEDE…PNIQSFLYHP (107 aa)). Residues 267 to 288 (GTKLLNVCGMSRGKRDGILKNE) constitute a DNA-binding region (H-T-H motif). Residues 352 to 362 (AQERQAQRQRA) show a composition bias toward low complexity. Disordered regions lie at residues 352–456 (AQER…QQQQ), 474–504 (QQAY…LNNS), and 538–624 (SWND…IHHE). Polar residues predominate over residues 369 to 391 (PGANGTSQAPPLMRANTTPSNGD). A compositionally biased stretch (low complexity) spans 392–426 (TSTFSSGLSSLGSWTGSHDQGHASAPTTAQPSPSS). A compositionally biased stretch (polar residues) spans 427-451 (MHNGATQMHMSLSNHGTASPTYAQS). A compositionally biased stretch (basic and acidic residues) spans 571–587 (LDGDDLHSPDSSDDRLA). The span at 615–624 (VGNGSGIHHE) shows a compositional bias: gly residues.

The protein belongs to the EFG1/PHD1/stuA family. Phosphorylated but is not a target of cAMP signaling.

The protein localises to the nucleus. Functionally, transcription factor that regulates asexual reproduction. Binds the StuA-response elements (StRE) with the consensus sequence 5'-(A/T)CGCG(T/A)N(A/C)-3' at the promoters of target genes. Regulates dimorphism, virulence, and the sporulation program. Required for mating, gall induction, and sporogenesis in maize tissue. Regulates expression of the filament-down-regulated gene UM00205 and the teliospore-specific gene ssp1. This is Cell pattern formation-associated protein ust1 (ust1) from Mycosarcoma maydis (Corn smut fungus).